The chain runs to 908 residues: Translation initiation factor IF-2 (908 aa).

Disordered regions lie at residues 122-180 (PVVE…VDDA) and 203-267 (EKAR…AVKK). The segment covering 132-143 (VAAEPEVVEAPE) has biased composition (acidic residues). Over residues 157–166 (EEPAAPAAPV) the composition is skewed to low complexity. Residues 223–248 (AKEDARPTKHVEDLAKLKKPHDKKDE) are compositionally biased toward basic and acidic residues. Positions 256–267 (KHNKKAGKAVKK) are enriched in basic residues. One can recognise a tr-type G domain in the interval 409 to 578 (PRAPIVTVMG…ALQAELLELS (170 aa)). A G1 region spans residues 418 to 425 (GHVDHGKT). A GTP-binding site is contributed by 418–425 (GHVDHGKT). The tract at residues 443-447 (GITQH) is G2. Residues 464–467 (DTPG) are G3. GTP contacts are provided by residues 464–468 (DTPGH) and 518–521 (NKMD). Residues 518–521 (NKMD) are G4. A G5 region spans residues 554–556 (SAH).

The protein belongs to the TRAFAC class translation factor GTPase superfamily. Classic translation factor GTPase family. IF-2 subfamily.

It is found in the cytoplasm. Functionally, one of the essential components for the initiation of protein synthesis. Protects formylmethionyl-tRNA from spontaneous hydrolysis and promotes its binding to the 30S ribosomal subunits. Also involved in the hydrolysis of GTP during the formation of the 70S ribosomal complex. The polypeptide is Translation initiation factor IF-2 (Saccharophagus degradans (strain 2-40 / ATCC 43961 / DSM 17024)).